The sequence spans 404 residues: Glucoside xylosyltransferase 1 (404 aa).

Residues 1–6 (MRRYLR) are Cytoplasmic-facing. The chain crosses the membrane as a helical; Signal-anchor for type II membrane protein span at residues 7–29 (VVGLCLACGFCSLLYAFSQLAVS). At 30–404 (LEEGAAGGRR…NRYDTPPKER (375 aa)) the chain is on the lumenal side. Asn-201 is a glycosylation site (N-linked (GlcNAc...) asparagine).

This sequence belongs to the glycosyltransferase 8 family.

It is found in the membrane. It catalyses the reaction 3-O-(beta-D-glucosyl)-L-seryl-[EGF-like domain protein] + UDP-alpha-D-xylose = 3-O-[alpha-D-xylosyl-(1-&gt;3)-beta-D-glucosyl]-L-seryl-[EGF-like domain protein] + UDP + H(+). In terms of biological role, glycosyltransferase which elongates the O-linked glucose attached to EGF-like repeats in the extracellular domain of Notch proteins by catalyzing the addition of xylose. This is Glucoside xylosyltransferase 1 (Gxylt1) from Mus musculus (Mouse).